Here is a 253-residue protein sequence, read N- to C-terminus: Ferritin-2, chloroplastic (253 aa).

A chloroplast-targeting transit peptide spans 1 to 45 (MLHKASPALSLLSSGYTGGGNLFPPSRNSSNLLFSPSGSRFSVQA). The extension peptide (EP) stretch occupies residues 46–82 (AKGTNTKSLTGVVFEPFEEVKKEMELVPTTPFVSLAR). The 154-residue stretch at 83 to 236 (HKFSDDSESA…EYVAQLRRIG (154 aa)) folds into the Ferritin-like diiron domain. The Fe cation site is built by Glu-100, Glu-135, His-138, Glu-184, and Gln-218.

It belongs to the ferritin family. As to quaternary structure, oligomer of 24 subunits. There are two types of subunits: L (light) chain and H (heavy) chain. The major chain can be light or heavy, depending on the species and tissue type. The functional molecule forms a roughly spherical shell with a diameter of 12 nm and contains a central cavity into which the insoluble mineral iron core is deposited.

It is found in the plastid. The protein resides in the chloroplast. The catalysed reaction is 4 Fe(2+) + O2 + 4 H(+) = 4 Fe(3+) + 2 H2O. Functionally, stores iron in a soluble, non-toxic, readily available form. Important for iron homeostasis. Has ferroxidase activity. Iron is taken up in the ferrous form and deposited as ferric hydroxides after oxidation. The protein is Ferritin-2, chloroplastic (FER2) of Arabidopsis thaliana (Mouse-ear cress).